An 86-amino-acid polypeptide reads, in one-letter code: Small ribosomal subunit protein bS16c (86 aa).

It belongs to the bacterial ribosomal protein bS16 family.

It is found in the plastid. Its subcellular location is the chloroplast. The chain is Small ribosomal subunit protein bS16c from Liriodendron tulipifera (Tuliptree).